Reading from the N-terminus, the 239-residue chain is Demethylmenaquinone methyltransferase (239 aa).

S-adenosyl-L-methionine-binding positions include Thr68, Asp86, and 111 to 112; that span reads NG.

Belongs to the class I-like SAM-binding methyltransferase superfamily. MenG/UbiE family.

It carries out the reaction a 2-demethylmenaquinol + S-adenosyl-L-methionine = a menaquinol + S-adenosyl-L-homocysteine + H(+). It functions in the pathway quinol/quinone metabolism; menaquinone biosynthesis; menaquinol from 1,4-dihydroxy-2-naphthoate: step 2/2. Functionally, methyltransferase required for the conversion of demethylmenaquinol (DMKH2) to menaquinol (MKH2). The polypeptide is Demethylmenaquinone methyltransferase (Tropheryma whipplei (strain TW08/27) (Whipple's bacillus)).